The primary structure comprises 576 residues: Apolipoprotein N-acyltransferase 1 (576 aa).

The next 7 helical transmembrane spans lie at 15-35, 38-58, 60-80, 92-112, 128-148, 168-188, and 204-224; these read LILC…FSFF, GVFA…TSIW, AFLW…YWIP, FVSI…FFLF, YILL…FQIF, ICGV…FLIL, and IASL…IGYI. Residues 236-538 enclose the CN hydrolase domain; that stretch reads LSVLMIQPDT…TGTRAFSIRL (303 aa). The active-site Proton acceptor is the E285. K355 is an active-site residue. C446 (nucleophile) is an active-site residue. The helical transmembrane segment at 549–569 threads the bilayer; it reads FGNSFLWIFCILILISRLIFV.

It belongs to the CN hydrolase family. Apolipoprotein N-acyltransferase subfamily.

Its subcellular location is the cell inner membrane. The enzyme catalyses N-terminal S-1,2-diacyl-sn-glyceryl-L-cysteinyl-[lipoprotein] + a glycerophospholipid = N-acyl-S-1,2-diacyl-sn-glyceryl-L-cysteinyl-[lipoprotein] + a 2-acyl-sn-glycero-3-phospholipid + H(+). The protein operates within protein modification; lipoprotein biosynthesis (N-acyl transfer). Functionally, catalyzes the phospholipid dependent N-acylation of the N-terminal cysteine of apolipoprotein, the last step in lipoprotein maturation. In Leptospira interrogans serogroup Icterohaemorrhagiae serovar copenhageni (strain Fiocruz L1-130), this protein is Apolipoprotein N-acyltransferase 1.